A 616-amino-acid polypeptide reads, in one-letter code: Chaperone protein DnaK (616 aa).

Thr175 is modified (phosphothreonine; by autocatalysis). Positions 579-616 are disordered; the sequence is GGDPSQAGGFDPNAAGGAQQEPHDDNVVDADFKVDDDK. Residues 599-616 show a composition bias toward basic and acidic residues; the sequence is EPHDDNVVDADFKVDDDK.

This sequence belongs to the heat shock protein 70 family.

Acts as a chaperone. This chain is Chaperone protein DnaK, found in Clostridium botulinum (strain Eklund 17B / Type B).